A 594-amino-acid polypeptide reads, in one-letter code: Probable acyl-CoA dehydrogenase (594 aa).

Glutamate 405 serves as the catalytic Proton acceptor.

It belongs to the acyl-CoA dehydrogenase family. Requires FAD as cofactor.

It catalyses the reaction a 2,3-saturated acyl-CoA + A = a 2,3-dehydroacyl-CoA + AH2. Its pathway is lipid metabolism; fatty acid beta-oxidation. Its function is as follows. Involved in the degradation of long-chain fatty acids. In Bacillus subtilis (strain 168), this protein is Probable acyl-CoA dehydrogenase (fadE).